A 598-amino-acid polypeptide reads, in one-letter code: MASHASSRIAKVLVANRGEIAVRVIRAARDARLPSVAVYAEPDAEAPHVRLADEAFALGGHTSAESYLDFGKILDAAAKSGANAIHPGYGFLAENADFAQAVIDAGLIWIGPSPQSIRDLGDKVTARHIAARAQAPLVPGTPDPVKNADEVVAFAKEHGVPIAIKAAFGGGGKGMKVARTLEEISELYESAVREATVAFGRGECFVERYLDKPRHVEAQVIADQHGNIVVAGTRDCSLQRRFQKLVEEAPAPFLTDAQRKEIHESAKRICKEAHYYGAGTVEYLVGQDGLISFLEVNTRLQVEHPVTEETTGIDLVLQQFKIANGEKLELIKDPIPCGHAIEFRINGEDAGRNFLPSPGPVSKFHPPTGPGVRLDSGVETGSVIGGQFDSMLAKLIVHGATRQEALARARRALDEFEVEGLATVIPFHRAVVSDPALIGDNNSFSVHTRWIETEWNNTIEPFIDNQPLDEEDTRPQQTVIVEVDGRRLEVSLPADLALANPAGCNPAGVIRKKPKPRKRGGHTGAATSGDAVTAPMQGTVVKVAVAEGQTVMTGDLVVVLEAMKMENPVTAHKDGIITGLAVEAGTAITQGTVLAEIK.

In terms of domain architecture, Biotin carboxylation spans 8-452 (RIAKVLVANR…SFSVHTRWIE (445 aa)). The 198-residue stretch at 127–324 (RHIAARAQAP…LVLQQFKIAN (198 aa)) folds into the ATP-grasp domain. 155–216 (AKEHGVPIAI…ERYLDKPRHV (62 aa)) is an ATP binding site. Residues E282, E295, and N297 each coordinate Mg(2+). The Mn(2+) site is built by E282, E295, and N297. The tract at residues 506-531 (PAGVIRKKPKPRKRGGHTGAATSGDA) is disordered. Over residues 510-521 (IRKKPKPRKRGG) the composition is skewed to basic residues. A Biotinyl-binding domain is found at 522–598 (HTGAATSGDA…TQGTVLAEIK (77 aa)). K564 is modified (N6-biotinyllysine).

In terms of assembly, the biotin-dependent acyl-CoA carboxylase complex is composed of AccA3, which contains the biotin carboxylase (BC) and biotin carboxyl carrier protein (BCCP) domains, and an AccD protein, which contains the carboxyl transferase (CT) domain. It depends on Mg(2+) as a cofactor. Mn(2+) is required as a cofactor. The cofactor is biotin.

The catalysed reaction is N(6)-biotinyl-L-lysyl-[protein] + hydrogencarbonate + ATP = N(6)-carboxybiotinyl-L-lysyl-[protein] + ADP + phosphate + H(+). It functions in the pathway lipid metabolism; fatty acid biosynthesis. Its pathway is lipid metabolism; mycolic acid biosynthesis. Its function is as follows. Component of a biotin-dependent acyl-CoA carboxylase complex. This subunit catalyzes the ATP-dependent carboxylation of the biotin carried by the biotin carboxyl carrier (BCC) domain, resulting in the formation of carboxyl biotin. The polypeptide is Biotin-dependent acyl-coenzyme A carboxylase alpha3 subunit (bccA) (Mycobacterium leprae (strain TN)).